The sequence spans 225 residues: Uracil-DNA glycosylase (225 aa).

Residue Asp68 is the Proton acceptor of the active site.

This sequence belongs to the uracil-DNA glycosylase (UDG) superfamily. UNG family.

The protein resides in the cytoplasm. It carries out the reaction Hydrolyzes single-stranded DNA or mismatched double-stranded DNA and polynucleotides, releasing free uracil.. Functionally, excises uracil residues from the DNA which can arise as a result of misincorporation of dUMP residues by DNA polymerase or due to deamination of cytosine. In Mycolicibacterium vanbaalenii (strain DSM 7251 / JCM 13017 / BCRC 16820 / KCTC 9966 / NRRL B-24157 / PYR-1) (Mycobacterium vanbaalenii), this protein is Uracil-DNA glycosylase.